A 415-amino-acid polypeptide reads, in one-letter code: Interleukin-5 receptor subunit alpha (415 aa).

An N-terminal signal peptide occupies residues 1–17; that stretch reads MVPVLLILVGALATLQA. Residues 18–339 are Extracellular-facing; sequence DLLNHKKFLL…KERKSLVEWH (322 aa). In terms of domain architecture, Fibronectin type-III 1 spans 29-120; it reads PPVNFTIKAT…VSAELKAPPG (92 aa). Asparagine 32 and asparagine 128 each carry an N-linked (GlcNAc...) asparagine glycan. 2 disulfide bridges follow: cysteine 131/cysteine 152 and cysteine 179/cysteine 193. 2 N-linked (GlcNAc...) asparagine glycosylation sites follow: asparagine 213 and asparagine 241. In terms of domain architecture, Fibronectin type-III 2 spans 238-331; sequence PPRNVTVEIE…WSQPIYVGKE (94 aa). The cysteines at positions 266 and 313 are disulfide-linked. Positions 319-323 match the WSXWS motif motif; sequence WGEWS. A helical membrane pass occupies residues 340-361; it reads LIVLPTAACFVLLIFSLICRVC. Topologically, residues 362 to 415 are cytoplasmic; the sequence is HLWTRLFPPVPAPKSNIKDLPVVTEYEKPSNETKIEVVHCVEEVGFEVMGNSTF. Positions 367-375 match the Box 1 motif motif; the sequence is LFPPVPAPK.

In terms of assembly, interacts with IL5. Interacts with CSF2RB. Interacts with JAK2. Interacts with SDCBP. In terms of tissue distribution, expressed on eosinophils and basophils. Also on B-cells.

It localises to the membrane. Its function is as follows. Cell surface receptor that plays an important role in the survival, differentiation, and chemotaxis of eosinophils. Acts by forming a heterodimeric receptor with CSF2RB subunit and subsequently binding to interleukin-5. In unstimulated conditions, interacts constitutively with JAK2. Heterodimeric receptor activation leads to JAK2 stimulation and subsequent activation of the JAK-STAT pathway. The polypeptide is Interleukin-5 receptor subunit alpha (Il5ra) (Mus musculus (Mouse)).